Here is a 404-residue protein sequence, read N- to C-terminus: Caspase b (404 aa).

A propeptide spanning residues 1 to 171 (MEDITQLLSD…DIYTPRSGTQ (171 aa)) is cleaved from the precursor. Residues 8 to 80 (LSDVLEDLVE…LRKIKQNERA (73 aa)) enclose the Pyrin domain. Active-site residues include histidine 249 and cysteine 296. A propeptide spanning residues 301–316 (SSGVLAQDSVFASDSW) is cleaved from the precursor.

It belongs to the peptidase C14A family. As to quaternary structure, upon direct LPS-binding, forms large homooligomers, resulting in its activation. These oligomers are often referred to as 'non-canonical inflammasomes'. Heterotetramer that consists of two anti-parallel arranged heterodimers, each one formed by a 20 kDa (p20) and a 10 kDa (p10) subunit. Interacts with caspa. Interacts with pycard; the interaction only occurs in the presence of nlrp1. Component of NLRP1 inflammasomes. Inflammasomes are supramolecular complexes that assemble in the cytosol in response to pathogens and other damage-associated signals and play critical roles in innate immunity and inflammation. The NLRP1 inflammasome is composed of the signal sensor nlrp1, and the adapter pycard (asc), which recruit effector pro-inflammatory caspases caspa and/or caspb. The interaction between nlrp1 and pycard is required for the sequential recruitment of caspa and then caspb. Caspa is preferentially recruited first and this causes the cleavage of pro-il1b into the midformed il1b. This is followed by the recruitment of caspb, which is activated and cleaves the midformed il1b resulting in il1b maturation. Post-translationally, the two subunits are derived from the precursor sequence by an autocatalytic mechanism. In terms of tissue distribution, expressed in the spleen, kidney and liver, and highly expressed in the gills and gut.

It is found in the inflammasome. The protein localises to the cytoplasm. It carries out the reaction Strict requirement for Asp at the P1 position. It has a preferred cleavage sequence of Tyr-Val-Ala-Asp-|- but also cleaves at Asp-Glu-Val-Asp-|-.. With respect to regulation, activated by homooligomerization induced by direct binding to cytosolic LPS. In terms of biological role, thiol protease which cleaves IL-1 beta (il1b), releasing the mature cytokine which is involved in a variety of inflammatory processes, and mediates apoptosis. Component of the NLRP1 inflammasome, which plays a crucial role in innate immunity and inflammation. In response to pathogens and other damage-associated signals, recruited to the NLRP1 inflammasome in its precursor form following the recruitment of caspase caspa. Its subsequent activation causes the cleavage of the midformed pro-il1b and results in il1b maturation and secretion in the extracellular milieu. Activated by direct binding to bacterial lipopolysaccharides (LPS), which causes non-canonical inflammasome activation and results in the pyroptosis of infected cells and their extrusion into the gut lumen, as well as in cytokine secretion. Plays a crucial role in the restriction of bacterial infection to intestinal sites. Pyroptosis limits bacterial replication, while cytokine secretion promotes the recruitment and activation of immune cells and triggers mucosal inflammation. Promotes pyroptosis by bacterial infection by E.piscicida. This Danio rerio (Zebrafish) protein is Caspase b.